The chain runs to 219 residues: HTH-type transcriptional activator FasR (219 aa).

The disordered stretch occupies residues 1–30; sequence MSDLANTAERRGEKRPAGGNRRGNRLPRDE. An HTH tetR-type domain is found at 29 to 89; the sequence is DERRGQLLIA…AVLQRHVDNL (61 aa). Residues 52 to 71 constitute a DNA-binding region (H-T-H motif); the sequence is GMDEIADRAGVSKPVLYQHF.

Homodimer.

With respect to regulation, fasR:DNA binding is regulated by long-chain acyl-CoAs (C14- to C26-CoA), which act as effector molecules that modulate the affinity of FasR for its DNA binding sequences and therefore modulate the expression of the essential fas-acpS operon. Functionally, transcriptional activator that plays a central role in sensing mycobacterial long-chain fatty acids and regulating lipid biosynthesis. Activates the expression of the genes encoding the fatty acid synthase (fas) and the 4-phosphopantetheinyl transferase (acpS), whose products are involved in the fatty acid and mycolic acid biosynthesis. Specifically binds to three conserved operator sequences present in the fas-acpS promoter region. Essential for M.smegmatis viability. The sequence is that of HTH-type transcriptional activator FasR from Mycolicibacterium smegmatis (strain ATCC 700084 / mc(2)155) (Mycobacterium smegmatis).